The following is a 455-amino-acid chain: Glycylpeptide N-tetradecanoyltransferase (455 aa).

38 to 41 contacts tetradecanoyl-CoA; it reads HKFW. The interval 168-204 is myristoyl CoA-binding; sequence INFLCVHKQLRSKRLTPVLIKEITRRVNKCDIWHALY. The active-site Proton acceptor; via carboxylate is L455.

It belongs to the NMT family. As to quaternary structure, monomer. Post-translationally, the N-terminus is blocked.

It localises to the cytoplasm. The enzyme catalyses N-terminal glycyl-[protein] + tetradecanoyl-CoA = N-tetradecanoylglycyl-[protein] + CoA + H(+). Its activity is regulated as follows. Inhibited by diethylpyrocarbonate. Competitively inhibited by S-(2-oxo)pentadecyl-CoA, a non hydrolysable myristoyl-CoA analog, and by SC-58272, a peptidomimetic derived from the N-terminal sequence of a natural substrate. Functionally, adds a myristoyl group to the N-terminal glycine residue of certain cellular proteins. Substrate specificity requires an N-terminal glycine in the nascent polypeptide substrates. Uncharged amino acids are preferred at position 2 while neutral residues are favored at positions 3 and 4. Ser is present at position 5 in almost all known N-myristoyl proteins and Lys is commonly encountered at postion 6. This is Glycylpeptide N-tetradecanoyltransferase (NMT1) from Saccharomyces cerevisiae (strain ATCC 204508 / S288c) (Baker's yeast).